We begin with the raw amino-acid sequence, 306 residues long: Ribosomal protein L11 methyltransferase (306 aa).

S-adenosyl-L-methionine-binding residues include Thr-139, Gly-173, Asp-195, and Asn-242.

The protein belongs to the methyltransferase superfamily. PrmA family.

It is found in the cytoplasm. It catalyses the reaction L-lysyl-[protein] + 3 S-adenosyl-L-methionine = N(6),N(6),N(6)-trimethyl-L-lysyl-[protein] + 3 S-adenosyl-L-homocysteine + 3 H(+). Functionally, methylates ribosomal protein L11. This Nostoc sp. (strain PCC 7120 / SAG 25.82 / UTEX 2576) protein is Ribosomal protein L11 methyltransferase.